The primary structure comprises 317 residues: Melanocyte-stimulating hormone receptor (317 aa).

The Extracellular portion of the chain corresponds to 1 to 37 (MPVQGSQRRLLGSLNSTPTAPPHLGLAANQTGARCLE). A glycan (N-linked (GlcNAc...) asparagine) is linked at Asn-29. Residues 38–63 (VSIPDGLFLSLGLVSLVENVLVVTAI) traverse the membrane as a helical segment. The Cytoplasmic portion of the chain corresponds to 64 to 72 (AKNRNLHSP). The chain crosses the membrane as a helical span at residues 73–93 (MYCFICCLALSDLLVSGSNML). Residues 94–118 (ETAVILLLEAGALAARAAVVQQLDN) lie on the Extracellular side of the membrane. Residues 119-140 (VIDVITCSSMLSSLCFLGAIAV) traverse the membrane as a helical segment. The Cytoplasmic segment spans residues 141–163 (DRYISIFYALRYHSIVTLPRARR). The chain crosses the membrane as a helical span at residues 164 to 183 (AVAAIWVASVLFSMLFIAYY). At 184-191 (DHAAVLLC) the chain is on the extracellular side. Residues 192–211 (LVVFFLAMLVLMAVLYIHML) form a helical membrane-spanning segment. Residues 212–240 (VRACQHAQGIARLHKRQRPAHQGFGLKGA) are Cytoplasmic-facing. Residues 241 to 266 (ATLTILLGIFFLCWGPFFLHLTLIVL) form a helical membrane-spanning segment. Residues 267-279 (CPQHPTCSCIFKN) lie on the Extracellular side of the membrane. A helical membrane pass occupies residues 280–300 (FNLFLALIICNAIIDPLIYAF). Over 301-317 (RSQELRRTLKEVLLCSW) the chain is Cytoplasmic. Residue Cys-315 is the site of S-palmitoyl cysteine attachment.

This sequence belongs to the G-protein coupled receptor 1 family. Interacts with MGRN1, but does not undergo MGRN1-mediated ubiquitination; this interaction competes with GNAS-binding and thus inhibits agonist-induced cAMP production. Interacts with OPN3; the interaction results in a decrease in MC1R-mediated cAMP signaling and ultimately a decrease in melanin production in melanocytes.

It is found in the cell membrane. Functionally, receptor for MSH (alpha, beta and gamma) and ACTH. The activity of this receptor is mediated by G proteins which activate adenylate cyclase. Mediates melanogenesis, the production of eumelanin (black/brown) and phaeomelanin (red/yellow), via regulation of cAMP signaling in melanocytes. The sequence is that of Melanocyte-stimulating hormone receptor (MC1R) from Cercopithecus diana (Diana monkey).